The sequence spans 398 residues: Lysophosphatidylserine lipase ABHD12 (398 aa).

Over 1–74 (MRKRTEPVAL…RKGLWLRLRK (74 aa)) the chain is Cytoplasmic. The helical transmembrane segment at 75–95 (ILFCVLGLYIAIPFLIKLCPG) threads the bilayer. The Extracellular segment spans residues 96–398 (IQAKLIFLNF…LGKSEPEHQH (303 aa)). N-linked (GlcNAc...) asparagine glycosylation occurs at asparagine 123. The active-site Nucleophile is serine 246. Residues aspartate 333 and histidine 372 each act as charge relay system in the active site.

This sequence belongs to the serine esterase family.

Its subcellular location is the endoplasmic reticulum membrane. It carries out the reaction 1-(9Z-octadecenoyl)-sn-glycero-3-phospho-L-serine + H2O = sn-glycero-3-phospho-L-serine + (9Z)-octadecenoate + H(+). The catalysed reaction is 1-(9Z-octadecenoyl)-sn-glycero-3-phospho-(1'-sn-glycerol) + H2O = sn-glycero-3-phospho-(1'-sn-glycerol) + (9Z)-octadecenoate + H(+). The enzyme catalyses 1-(9Z-octadecenoyl)-sn-glycero-3-phospho-(1D-myo-inositol) + H2O = sn-glycero-3-phospho-1D-myo-inositol + (9Z)-octadecenoate + H(+). It catalyses the reaction 1-(9Z-octadecenoyl)-sn-glycero-3-phosphoethanolamine + H2O = sn-glycero-3-phosphoethanolamine + (9Z)-octadecenoate + H(+). It carries out the reaction 1-(9Z-octadecenoyl)-sn-glycero-3-phosphocholine + H2O = 1-(9Z-octadecenoyl)-sn-glycerol + phosphocholine + H(+). The catalysed reaction is 2-(9Z-octadecenoyl)-glycerol + H2O = glycerol + (9Z)-octadecenoate + H(+). The enzyme catalyses 1-hexadecanoyl-sn-glycero-3-phospho-L-serine + H2O = sn-glycero-3-phospho-L-serine + hexadecanoate + H(+). It catalyses the reaction 2-(5Z,8Z,11Z,14Z-eicosatetraenoyl)-glycerol + H2O = glycerol + (5Z,8Z,11Z,14Z)-eicosatetraenoate + H(+). It carries out the reaction Hydrolyzes glycerol monoesters of long-chain fatty acids.. The catalysed reaction is 1-decanoylglycerol + H2O = decanoate + glycerol + H(+). The enzyme catalyses 1-dodecanoylglycerol + H2O = dodecanoate + glycerol + H(+). It catalyses the reaction 1-tetradecanoylglycerol + H2O = tetradecanoate + glycerol + H(+). It carries out the reaction 2-hexadecanoylglycerol + H2O = glycerol + hexadecanoate + H(+). The catalysed reaction is 1-(9Z-octadecenoyl)-glycerol + H2O = glycerol + (9Z)-octadecenoate + H(+). The enzyme catalyses 2-(9Z,12Z-octadecadienoyl)-glycerol + H2O = (9Z,12Z)-octadecadienoate + glycerol + H(+). It catalyses the reaction 1-(5Z,8Z,11Z,14Z-eicosatetraenoyl)-glycerol + H2O = glycerol + (5Z,8Z,11Z,14Z)-eicosatetraenoate + H(+). It carries out the reaction 1-(9Z,12Z-octadecadienoyl)-glycerol + H2O = (9Z,12Z)-octadecadienoate + glycerol + H(+). The catalysed reaction is 1-hexadecanoylglycerol + H2O = glycerol + hexadecanoate + H(+). The enzyme catalyses 1-octadecanoylglycerol + H2O = octadecanoate + glycerol + H(+). It catalyses the reaction 1-octadecanoyl-2-(9,10-epoxyoctadecanoyl)-sn-glycero-3-phospho-L-serine + H2O = 9,10-epoxyoctadecanoate + 1-octadecanoyl-sn-glycero-3-phosphoserine + H(+). It carries out the reaction 1-octadecanoyl-2-(10-hydroxyoctadecanoyl)-sn-glycero-3-phospho-L-serine + H2O = 1-octadecanoyl-sn-glycero-3-phosphoserine + 10-hydroxyoctadecanoate + H(+). The catalysed reaction is 1-hexadecanoyl-2-(10-hydroxyoctadecanoyl)-sn-glycero-3-phospho-L-serine + H2O = 10-hydroxyoctadecanoate + 1-hexadecanoyl-sn-glycero-3-phospho-L-serine + H(+). In terms of biological role, lysophosphatidylserine (LPS) lipase that mediates the hydrolysis of lysophosphatidylserine, a class of signaling lipids that regulates immunological and neurological processes. Represents a major lysophosphatidylserine lipase in the brain, thereby playing a key role in the central nervous system. Also able to hydrolyze oxidized phosphatidylserine; oxidized phosphatidylserine is produced in response to severe inflammatory stress and constitutes a proapoptotic 'eat me' signal. Also has monoacylglycerol (MAG) lipase activity: hydrolyzes 2-arachidonoylglycerol (2-AG), thereby acting as a regulator of endocannabinoid signaling pathways. Has a strong preference for very-long-chain lipid substrates; substrate specificity is likely due to improved catalysis and not improved substrate binding. The chain is Lysophosphatidylserine lipase ABHD12 from Macaca fascicularis (Crab-eating macaque).